We begin with the raw amino-acid sequence, 202 residues long: FMN-dependent NADH:quinone oxidoreductase (202 aa).

Residues Ser-10 and 95–98 (MYNF) contribute to the FMN site.

This sequence belongs to the azoreductase type 1 family. In terms of assembly, homodimer. It depends on FMN as a cofactor.

It carries out the reaction 2 a quinone + NADH + H(+) = 2 a 1,4-benzosemiquinone + NAD(+). The catalysed reaction is N,N-dimethyl-1,4-phenylenediamine + anthranilate + 2 NAD(+) = 2-(4-dimethylaminophenyl)diazenylbenzoate + 2 NADH + 2 H(+). Its function is as follows. Quinone reductase that provides resistance to thiol-specific stress caused by electrophilic quinones. In terms of biological role, also exhibits azoreductase activity. Catalyzes the reductive cleavage of the azo bond in aromatic azo compounds to the corresponding amines. The sequence is that of FMN-dependent NADH:quinone oxidoreductase from Pseudoalteromonas atlantica (strain T6c / ATCC BAA-1087).